An 89-amino-acid chain; its full sequence is Large ribosomal subunit protein bL28 (89 aa).

The protein belongs to the bacterial ribosomal protein bL28 family.

The chain is Large ribosomal subunit protein bL28 from Chlamydia muridarum (strain MoPn / Nigg).